Here is a 204-residue protein sequence, read N- to C-terminus: Thiamine-phosphate synthase (204 aa).

4-amino-2-methyl-5-(diphosphooxymethyl)pyrimidine is bound by residues 32 to 36 and Asp64; that span reads QLRMK. 2 residues coordinate Mg(2+): Asp65 and Asp84. Thr103 contributes to the 4-amino-2-methyl-5-(diphosphooxymethyl)pyrimidine binding site. A 2-[(2R,5Z)-2-carboxy-4-methylthiazol-5(2H)-ylidene]ethyl phosphate-binding site is contributed by 129 to 131; the sequence is TTT. Lys132 is a 4-amino-2-methyl-5-(diphosphooxymethyl)pyrimidine binding site. Gly165 is a binding site for 2-[(2R,5Z)-2-carboxy-4-methylthiazol-5(2H)-ylidene]ethyl phosphate.

This sequence belongs to the thiamine-phosphate synthase family. It depends on Mg(2+) as a cofactor.

It catalyses the reaction 2-[(2R,5Z)-2-carboxy-4-methylthiazol-5(2H)-ylidene]ethyl phosphate + 4-amino-2-methyl-5-(diphosphooxymethyl)pyrimidine + 2 H(+) = thiamine phosphate + CO2 + diphosphate. The catalysed reaction is 2-(2-carboxy-4-methylthiazol-5-yl)ethyl phosphate + 4-amino-2-methyl-5-(diphosphooxymethyl)pyrimidine + 2 H(+) = thiamine phosphate + CO2 + diphosphate. The enzyme catalyses 4-methyl-5-(2-phosphooxyethyl)-thiazole + 4-amino-2-methyl-5-(diphosphooxymethyl)pyrimidine + H(+) = thiamine phosphate + diphosphate. Its pathway is cofactor biosynthesis; thiamine diphosphate biosynthesis; thiamine phosphate from 4-amino-2-methyl-5-diphosphomethylpyrimidine and 4-methyl-5-(2-phosphoethyl)-thiazole: step 1/1. Its function is as follows. Condenses 4-methyl-5-(beta-hydroxyethyl)thiazole monophosphate (THZ-P) and 2-methyl-4-amino-5-hydroxymethyl pyrimidine pyrophosphate (HMP-PP) to form thiamine monophosphate (TMP). This chain is Thiamine-phosphate synthase, found in Bacteroides fragilis (strain ATCC 25285 / DSM 2151 / CCUG 4856 / JCM 11019 / LMG 10263 / NCTC 9343 / Onslow / VPI 2553 / EN-2).